The primary structure comprises 562 residues: BOS complex subunit NCLN (562 aa).

Positions 1-41 are cleaved as a signal peptide; that stretch reads MLEEAGEVLESVLKASCLPLSFLLFVPAVLLLLGPPPAAEA. At 42–521 the chain is on the extracellular side; that stretch reads AHESTVYRMQ…VMNAYRVKPA (480 aa). N-linked (GlcNAc...) asparagine glycosylation is present at asparagine 240. The tract at residues 420–447 is disordered; it reads GFDEGHLQPNREGSTCRSADLHGSDADP. A helical transmembrane segment spans residues 522–542; it reads IFDLLLAVCIAAYLGVAYVAV. Residues 543 to 562 lie on the Cytoplasmic side of the membrane; that stretch reads QNFGLLYRMIQRLSLKTKQQ.

The protein belongs to the nicastrin family. In terms of assembly, component of the multi-pass translocon (MPT) complex.

The protein resides in the endoplasmic reticulum membrane. Functionally, component of the multi-pass translocon (MPT) complex that mediates insertion of multi-pass membrane proteins into the lipid bilayer of membranes. The MPT complex takes over after the SEC61 complex: following membrane insertion of the first few transmembrane segments of proteins by the SEC61 complex, the MPT complex occludes the lateral gate of the SEC61 complex to promote insertion of subsequent transmembrane regions. May antagonize Nodal signaling and subsequent organization of axial structures during mesodermal patterning, via its interaction with NOMO. In Gallus gallus (Chicken), this protein is BOS complex subunit NCLN (NCLN).